The following is a 241-amino-acid chain: Small ribosomal subunit protein uS2 (241 aa).

It belongs to the universal ribosomal protein uS2 family.

This chain is Small ribosomal subunit protein uS2, found in Klebsiella pneumoniae subsp. pneumoniae (strain ATCC 700721 / MGH 78578).